The following is a 194-amino-acid chain: MKLLHLDSSALGANSVTRVLSAAVVEQQRRRHPEVDVSYRDLDRDPIPHLTAQTLAQTDPAEAAAAEAVMQQFLQADVIVIGAPMYNFAIPSTLKAWIDRIAVAGRTFQYTANGPEGLAGGKRVIIASARGGLYADPTNDFQEPYLRQVLGFLGIDDISFVRAEGVAYSPQHRADALASALAGLGEEEEAAVSA.

Residues serine 9 and 85–88 each bind FMN; that span reads MYNF.

The protein belongs to the azoreductase type 1 family. As to quaternary structure, homodimer. It depends on FMN as a cofactor.

The enzyme catalyses 2 a quinone + NADH + H(+) = 2 a 1,4-benzosemiquinone + NAD(+). It carries out the reaction N,N-dimethyl-1,4-phenylenediamine + anthranilate + 2 NAD(+) = 2-(4-dimethylaminophenyl)diazenylbenzoate + 2 NADH + 2 H(+). In terms of biological role, quinone reductase that provides resistance to thiol-specific stress caused by electrophilic quinones. Its function is as follows. Also exhibits azoreductase activity. Catalyzes the reductive cleavage of the azo bond in aromatic azo compounds to the corresponding amines. The protein is FMN-dependent NADH:quinone oxidoreductase 1 of Xanthomonas euvesicatoria pv. vesicatoria (strain 85-10) (Xanthomonas campestris pv. vesicatoria).